The primary structure comprises 193 residues: ATP-dependent Clp protease proteolytic subunit (193 aa).

S97 serves as the catalytic Nucleophile. H122 is a catalytic residue.

This sequence belongs to the peptidase S14 family. As to quaternary structure, fourteen ClpP subunits assemble into 2 heptameric rings which stack back to back to give a disk-like structure with a central cavity, resembling the structure of eukaryotic proteasomes.

The protein localises to the cytoplasm. The enzyme catalyses Hydrolysis of proteins to small peptides in the presence of ATP and magnesium. alpha-casein is the usual test substrate. In the absence of ATP, only oligopeptides shorter than five residues are hydrolyzed (such as succinyl-Leu-Tyr-|-NHMec, and Leu-Tyr-Leu-|-Tyr-Trp, in which cleavage of the -Tyr-|-Leu- and -Tyr-|-Trp bonds also occurs).. In terms of biological role, cleaves peptides in various proteins in a process that requires ATP hydrolysis. Has a chymotrypsin-like activity. Plays a major role in the degradation of misfolded proteins. The polypeptide is ATP-dependent Clp protease proteolytic subunit (Fusobacterium nucleatum subsp. nucleatum (strain ATCC 25586 / DSM 15643 / BCRC 10681 / CIP 101130 / JCM 8532 / KCTC 2640 / LMG 13131 / VPI 4355)).